The sequence spans 1516 residues: Receptor-type tyrosine-protein phosphatase S (1516 aa).

An N-terminal signal peptide occupies residues Met1 to Ala28. The Extracellular portion of the chain corresponds to Glu29–Gly854. Ig-like C2-type domains are found at residues Pro32–Thr122, Pro134–Tyr223, and Pro235–Thr317. 2 cysteine pairs are disulfide-bonded: Cys53–Cys106 and Cys155–Cys206. An important for binding to glycosaminoglycan chains region spans residues Lys67–Lys71. Residues Asn253 and Asn298 are each glycosylated (N-linked (GlcNAc...) asparagine). The cysteines at positions 256 and 301 are disulfide-linked. Fibronectin type-III domains follow at residues Ala324–Gln414, Ala419–Gly513, Gln517–Ser606, and Leu608–Asn692. A helical transmembrane segment spans residues Leu855–Ile875. Residues Leu876–Thr1516 lie on the Cytoplasmic side of the membrane. 2 consecutive Tyrosine-protein phosphatase domains span residues Leu961 to Ala1216 and Met1248 to Tyr1507. Active-site phosphocysteine intermediate residues include Cys1157 and Cys1448.

Belongs to the protein-tyrosine phosphatase family. Receptor class 2A subfamily. In terms of assembly, homodimer. Binding to large heparan sulfate proteoglycan structures promotes oligomerization. Binding to chondroitin sulfate proteoglycan does not lead to oligomerization. Interacts (via Ig-like domains) with NTRK1 and NTRK3, but does not form detectable complexes with NTRK2. Interacts (via extracellular domain) with the heparan sulfate proteoglycans AGRN and COL18A1. A cleavage occurs, separating the extracellular domain from the transmembrane segment. This process called 'ectodomain shedding' is thought to be involved in receptor desensitization, signal transduction and/or membrane localization. As to expression, detected in embryonic brain, dorsal root ganglion and spinal cord. Detected in embryonic retina (at protein level). Detected in embryonic brain, spinal cord, dorsal root ganglion, trigeminal ganglion, ganglia associated with the precardinal vein and vagus nerve, the inner and outer nuclear layer of the retina, limb, breast muscle, heart, gut and lung.

Its subcellular location is the cell membrane. It localises to the cell projection. It is found in the axon. The protein resides in the perikaryon. The protein localises to the cytoplasmic vesicle. Its subcellular location is the secretory vesicle. It localises to the synaptic vesicle membrane. It is found in the synapse. The protein resides in the synaptosome. The protein localises to the postsynaptic density. Its subcellular location is the neuron projection. It localises to the growth cone. The catalysed reaction is O-phospho-L-tyrosyl-[protein] + H2O = L-tyrosyl-[protein] + phosphate. In terms of biological role, cell surface receptor that binds to glycosaminoglycans, including chondroitin sulfate proteoglycans and heparan sulfate proteoglycans. Binding to chondroitin sulfate and heparan sulfate proteoglycans has opposite effects on PTPRS oligomerization and regulation of neurite outgrowth. Contributes to the inhibition of neurite and axonal outgrowth by chondroitin sulfate proteoglycans, also after nerve transection. Plays a role in stimulating neurite outgrowth in response to the heparan sulfate proteoglycan GPC2. Required for normal brain development, especially for normal development of the pituitary gland and the olfactory bulb. Functions as tyrosine phosphatase. Mediates dephosphorylation of NTRK1, NTRK2 and NTRK3. Plays a role in down-regulation of signaling cascades that lead to the activation of Akt and MAP kinases. Down-regulates TLR9-mediated activation of NF-kappa-B, as well as production of TNF, interferon alpha and interferon beta. This Gallus gallus (Chicken) protein is Receptor-type tyrosine-protein phosphatase S (PTPRS).